We begin with the raw amino-acid sequence, 265 residues long: UPF0294 protein KPK_4510 (265 aa).

It belongs to the UPF0294 family.

Its subcellular location is the cytoplasm. This chain is UPF0294 protein KPK_4510, found in Klebsiella pneumoniae (strain 342).